A 358-amino-acid chain; its full sequence is Chorismate synthase (358 aa).

Arg-47 is an NADP(+) binding site. FMN-binding positions include 124 to 126 (RSS), 240 to 241 (NA), Gly-284, 299 to 303 (KPVAT), and Arg-325.

This sequence belongs to the chorismate synthase family. As to quaternary structure, homotetramer. FMNH2 serves as cofactor.

The enzyme catalyses 5-O-(1-carboxyvinyl)-3-phosphoshikimate = chorismate + phosphate. Its pathway is metabolic intermediate biosynthesis; chorismate biosynthesis; chorismate from D-erythrose 4-phosphate and phosphoenolpyruvate: step 7/7. Functionally, catalyzes the anti-1,4-elimination of the C-3 phosphate and the C-6 proR hydrogen from 5-enolpyruvylshikimate-3-phosphate (EPSP) to yield chorismate, which is the branch point compound that serves as the starting substrate for the three terminal pathways of aromatic amino acid biosynthesis. This reaction introduces a second double bond into the aromatic ring system. The polypeptide is Chorismate synthase (Phocaeicola vulgatus (strain ATCC 8482 / DSM 1447 / JCM 5826 / CCUG 4940 / NBRC 14291 / NCTC 11154) (Bacteroides vulgatus)).